The chain runs to 432 residues: Lysosomal acid phosphatase (432 aa).

Residues 1-32 (MADGSCLGSGPQLGLIALLVVLLFSAVPLAQS) form the signal peptide. Residues 33-384 (RELRFVTLVY…TTSFIMTEET (352 aa)) are Lumenal-facing. The active-site Nucleophile is His-44. Asn-94, Asn-135, Asn-179, Asn-193, and Asn-269 each carry an N-linked (GlcNAc...) asparagine glycan. 3 cysteine pairs are disulfide-bonded: Cys-161/Cys-373, Cys-214/Cys-313, and Cys-348/Cys-352. Asp-290 functions as the Proton donor in the catalytic mechanism. N-linked (GlcNAc...) asparagine glycosylation is found at Asn-325 and Asn-334. The helical transmembrane segment at 385-405 (IIGLTIGAIALFIIIVVLMLL) threads the bilayer. Residues 406 to 432 (SCNEPKDDGYQHVSDEGDDHETKGLAM) are Cytoplasmic-facing.

The protein belongs to the histidine acid phosphatase family. In terms of processing, the membrane-bound form is converted to the soluble form by sequential proteolytic processing. First, the C-terminal cytoplasmic tail is removed. Cleavage by a lysosomal protease releases the soluble form in the lysosome lumen.

The protein resides in the lysosome membrane. It is found in the lysosome lumen. The catalysed reaction is a phosphate monoester + H2O = an alcohol + phosphate. This chain is Lysosomal acid phosphatase (acp2), found in Xenopus laevis (African clawed frog).